Consider the following 54-residue polypeptide: U7-myrmicitoxin-Tb1a (54 aa).

The first 26 residues, 1-26 (MQLSHLLLAFAMIFVMTIIHTPQVQA), serve as a signal peptide directing secretion. The propeptide occupies 27 to 36 (DAMADADADA). Residues Cys40 and Cys49 are joined by a disulfide bond.

Expressed by the venom gland.

It localises to the secreted. Functionally, venom protein with unknown function. Does not induce paralysis when a high dose is administered by intrathoracic injection into the blowfly Lucilia caesar. This is U7-myrmicitoxin-Tb1a from Tetramorium bicarinatum (Tramp ant).